Here is a 161-residue protein sequence, read N- to C-terminus: Allophycocyanin alpha chain (161 aa).

Asn-71 carries the N4-methylasparagine modification. Cys-81 contacts (2R,3E)-phycocyanobilin.

This sequence belongs to the phycobiliprotein family. In terms of assembly, heterodimer of an alpha and a beta chain. Post-translationally, contains one covalently linked phycocyanobilin chromophore.

It localises to the plastid. It is found in the chloroplast thylakoid membrane. Its function is as follows. Light-harvesting photosynthetic bile pigment-protein from the phycobiliprotein complex. Allophycocyanin has a maximum absorption at approximately 650 nanometers. The polypeptide is Allophycocyanin alpha chain (apcA) (Cyanidium caldarium (Red alga)).